The primary structure comprises 172 residues: Adenine phosphoribosyltransferase (172 aa).

The protein belongs to the purine/pyrimidine phosphoribosyltransferase family. In terms of assembly, homodimer.

It is found in the cytoplasm. It carries out the reaction AMP + diphosphate = 5-phospho-alpha-D-ribose 1-diphosphate + adenine. Its pathway is purine metabolism; AMP biosynthesis via salvage pathway; AMP from adenine: step 1/1. Functionally, catalyzes a salvage reaction resulting in the formation of AMP, that is energically less costly than de novo synthesis. This is Adenine phosphoribosyltransferase from Clostridium botulinum (strain Eklund 17B / Type B).